Here is an 83-residue protein sequence, read N- to C-terminus: RNA-binding protein Hfq (83 aa).

The 61-residue stretch at 11-71 folds into the Sm domain; it reads DVFLNYIRKN…ISTIMPASPV (61 aa).

This sequence belongs to the Hfq family. As to quaternary structure, homohexamer.

Its function is as follows. RNA chaperone that binds small regulatory RNA (sRNAs) and mRNAs to facilitate mRNA translational regulation in response to envelope stress, environmental stress and changes in metabolite concentrations. Also binds with high specificity to tRNAs. This is RNA-binding protein Hfq from Rhodospirillum rubrum (strain ATCC 11170 / ATH 1.1.1 / DSM 467 / LMG 4362 / NCIMB 8255 / S1).